The following is a 79-amino-acid chain: Conotoxin 8 (79 aa).

Positions 1–22 are cleaved as a signal peptide; that stretch reads MKLTCVLIITVLFLTASQLITA. Positions 23–47 are excised as a propeptide; that stretch reads DYSRGQRQYRAVRLGDEMRNFKGAR. Cystine bridges form between cysteine 49/cysteine 62, cysteine 56/cysteine 67, and cysteine 61/cysteine 77.

The protein belongs to the conotoxin O1 superfamily. In terms of tissue distribution, expressed by the venom duct.

Its subcellular location is the secreted. The chain is Conotoxin 8 from Conus vexillum (Flag cone).